A 363-amino-acid polypeptide reads, in one-letter code: Probable L-tyrosine/L-aspartate decarboxylase (363 aa).

The residue at position 208 (lysine 208) is an N6-(pyridoxal phosphate)lysine.

This sequence belongs to the group II decarboxylase family. MfnA subfamily. Pyridoxal 5'-phosphate serves as cofactor.

It catalyses the reaction L-tyrosine + H(+) = tyramine + CO2. It carries out the reaction L-aspartate + H(+) = beta-alanine + CO2. It functions in the pathway cofactor biosynthesis; methanofuran biosynthesis. It participates in cofactor biosynthesis; coenzyme A biosynthesis. Its function is as follows. Catalyzes the decarboxylation of L-tyrosine to produce tyramine for methanofuran biosynthesis. Can also catalyze the decarboxylation of L-aspartate to produce beta-alanine for coenzyme A (CoA) biosynthesis. The protein is Probable L-tyrosine/L-aspartate decarboxylase of Methanothermobacter thermautotrophicus (strain ATCC 29096 / DSM 1053 / JCM 10044 / NBRC 100330 / Delta H) (Methanobacterium thermoautotrophicum).